We begin with the raw amino-acid sequence, 506 residues long: Lysine--tRNA ligase (506 aa).

Residues Glu-416 and Glu-423 each coordinate Mg(2+).

This sequence belongs to the class-II aminoacyl-tRNA synthetase family. Homodimer. Mg(2+) is required as a cofactor.

Its subcellular location is the cytoplasm. It carries out the reaction tRNA(Lys) + L-lysine + ATP = L-lysyl-tRNA(Lys) + AMP + diphosphate. The chain is Lysine--tRNA ligase from Baumannia cicadellinicola subsp. Homalodisca coagulata.